A 535-amino-acid polypeptide reads, in one-letter code: Bifunctional purine biosynthesis protein PurH (535 aa).

The region spanning 6–151 (TRLPIRRALI…KNHKDVAIVV (146 aa)) is the MGS-like domain.

This sequence belongs to the PurH family.

The catalysed reaction is (6R)-10-formyltetrahydrofolate + 5-amino-1-(5-phospho-beta-D-ribosyl)imidazole-4-carboxamide = 5-formamido-1-(5-phospho-D-ribosyl)imidazole-4-carboxamide + (6S)-5,6,7,8-tetrahydrofolate. It carries out the reaction IMP + H2O = 5-formamido-1-(5-phospho-D-ribosyl)imidazole-4-carboxamide. It functions in the pathway purine metabolism; IMP biosynthesis via de novo pathway; 5-formamido-1-(5-phospho-D-ribosyl)imidazole-4-carboxamide from 5-amino-1-(5-phospho-D-ribosyl)imidazole-4-carboxamide (10-formyl THF route): step 1/1. Its pathway is purine metabolism; IMP biosynthesis via de novo pathway; IMP from 5-formamido-1-(5-phospho-D-ribosyl)imidazole-4-carboxamide: step 1/1. The chain is Bifunctional purine biosynthesis protein PurH from Pseudomonas fluorescens (strain SBW25).